Here is a 244-residue protein sequence, read N- to C-terminus: Phosphoadenosine 5'-phosphosulfate reductase (244 aa).

Cys239 serves as the catalytic Nucleophile; cysteine thiosulfonate intermediate.

It belongs to the PAPS reductase family. CysH subfamily.

It localises to the cytoplasm. The catalysed reaction is [thioredoxin]-disulfide + sulfite + adenosine 3',5'-bisphosphate + 2 H(+) = [thioredoxin]-dithiol + 3'-phosphoadenylyl sulfate. The protein operates within sulfur metabolism; hydrogen sulfide biosynthesis; sulfite from sulfate: step 3/3. In terms of biological role, catalyzes the formation of sulfite from phosphoadenosine 5'-phosphosulfate (PAPS) using thioredoxin as an electron donor. The chain is Phosphoadenosine 5'-phosphosulfate reductase from Buchnera aphidicola subsp. Acyrthosiphon pisum (strain Tuc7).